The sequence spans 208 residues: CASP-like protein 3A1 (208 aa).

Composition is skewed to polar residues over residues 1–11 (MGSFANGQNGS) and 17–33 (TPAT…TTSA). Residues 1–33 (MGSFANGQNGSELGIQTPATGSNAALEPPTTSA) are disordered. Residues 1–43 (MGSFANGQNGSELGIQTPATGSNAALEPPTTSAAAPRCPRLGM) lie on the Cytoplasmic side of the membrane. Residues 44–64 (AMVAARAAALVMALLSVSLMV) form a helical membrane-spanning segment. Residues 65-92 (SAKQRGTLAIFGIEIPLYAKWSLSDSLQ) are Extracellular-facing. A helical transmembrane segment spans residues 93-113 (SLVGISAAAAAYSLAQLLSIA). Over 114–128 (HTALKKAPVVPSRRY) the chain is Cytoplasmic. Residues 129–149 (AWMLLAGDQVFAYAMLSAGSA) traverse the membrane as a helical segment. At 150–183 (AAAVANLNRTGVRHTALPNFCKPLPRFCDLSAAS) the chain is on the extracellular side. An N-linked (GlcNAc...) asparagine glycan is attached at Asn-157. A helical transmembrane segment spans residues 184 to 204 (IACAFLGCAFLAASAVIDVIW). Over 205-208 (LSRL) the chain is Cytoplasmic.

Belongs to the Casparian strip membrane proteins (CASP) family. As to quaternary structure, homodimer and heterodimers.

The protein localises to the cell membrane. This chain is CASP-like protein 3A1, found in Hordeum vulgare subsp. vulgare (Domesticated barley).